The chain runs to 310 residues: N-acetyl-gamma-glutamyl-phosphate reductase (310 aa).

The active site involves cysteine 117.

This sequence belongs to the NAGSA dehydrogenase family. Type 2 subfamily.

It is found in the cytoplasm. It catalyses the reaction N-acetyl-L-glutamate 5-semialdehyde + phosphate + NADP(+) = N-acetyl-L-glutamyl 5-phosphate + NADPH + H(+). It participates in amino-acid biosynthesis; L-arginine biosynthesis; N(2)-acetyl-L-ornithine from L-glutamate: step 3/4. Its function is as follows. Catalyzes the NADPH-dependent reduction of N-acetyl-5-glutamyl phosphate to yield N-acetyl-L-glutamate 5-semialdehyde. The chain is N-acetyl-gamma-glutamyl-phosphate reductase from Rhizobium etli (strain ATCC 51251 / DSM 11541 / JCM 21823 / NBRC 15573 / CFN 42).